Consider the following 287-residue polypeptide: mRNA-capping enzyme regulatory subunit (287 aa).

Belongs to the chordopoxvirinae mRNA-capping enzyme regulatory subunit family. As to quaternary structure, heterodimer of a catalytic and a regulatory subunit. Intrinsic methyltransferase activity of the catalytic subunit is weak and needs to be stimulated 30- to 50-fold by the regulatory subunit, which is itself catalytically inert.

It is found in the virion. Regulatory subunit of the mRNA cap enzyme which stabilizes the catalytic subunit and enhances its methyltransferase activity through an allosteric mechanism. Heterodimeric mRNA capping enzyme catalyzes the linkage of a N7-methyl-guanosine moiety to the first transcribed nucleotide (cap 0 structure), whereas the polymerase associated VP39 is responsible for a second methylation at the 2'-O position of the ribose (cap 1 structure). Functionally, the heterodimeric enzyme is also involved in early viral gene transcription termination and intermediate viral gene transcription initiation. Early gene transcription termination requires the termination factor VTF, the DNA-dependent ATPase NPH-I and the Rap94 subunit of the viral RNA polymerase, as well as the presence of a specific termination motif. Binds, together with RAP94, to the termination motif 5'-UUUUUNU-3' in the nascent early mRNA. This chain is mRNA-capping enzyme regulatory subunit, found in Vaccinia virus (strain Ankara) (VACV).